The primary structure comprises 37 residues: Potassium channel toxin alpha-KTx 1.3 (37 aa).

Glutamine 1 carries the post-translational modification Pyrrolidone carboxylic acid. Cystine bridges form between cysteine 7/cysteine 28, cysteine 13/cysteine 33, and cysteine 17/cysteine 35. Positions 26 to 33 (GKCMGKKC) are interaction with Ca(2+)-activated K(+) channels.

This sequence belongs to the short scorpion toxin superfamily. Potassium channel inhibitor family. Alpha-KTx 01 subfamily. Expressed by the venom gland.

The protein localises to the secreted. Functionally, blocks selectively the high conductance calcium-activated (maxi-K) potassium channels (KCa1.1/KCNMA1). The protein is Potassium channel toxin alpha-KTx 1.3 of Hottentotta tamulus (Eastern Indian scorpion).